The chain runs to 768 residues: Actin filament-associated protein 1-like 1 (768 aa).

Residues 82–145 (DLRDMPEDDG…GKSPEYISSH (64 aa)) form a disordered region. Phosphoserine occurs at positions 94, 98, 104, and 153. The disordered stretch occupies residues 173–211 (GELKSSYNDSDAMSSSYESYDEEEEEGKSPQPRHQWPSE). Positions 177 to 190 (SSYNDSDAMSSSYE) are enriched in low complexity. A PH 1 domain is found at 220–316 (ECRICAFLLR…WLKVIREVSK (97 aa)). A phosphoserine mark is found at Ser329 and Ser343. Residues 418–512 (EVPCCGYLNV…WLGLLLVEMG (95 aa)) form the PH 2 domain. A Phosphotyrosine modification is found at Tyr557. The disordered stretch occupies residues 566–604 (QDEEPERPTGAQVKRHASSCSEKSHRVDPQVKVKRHASS). Basic and acidic residues predominate over residues 587 to 596 (EKSHRVDPQV). A coiled-coil region spans residues 611–700 (GKNRAEEDAR…VAVKERLQQS (90 aa)). Residues 705–768 (PALGLSVSSK…KAKEWEMKKT (64 aa)) are disordered. The span at 710–729 (SVSSKPKSGETANKPQNSVP) shows a compositional bias: polar residues. The residue at position 747 (Ser747) is a Phosphoserine. A compositionally biased stretch (basic and acidic residues) spans 759–768 (KAKEWEMKKT).

In terms of assembly, interacts with CTTN. As to expression, expressed in breast, colon and brain. In all 3 tissues, expressed in the microvasculature (at protein level). In addition, in the breast, found in the contractile myoepithelial cell layer which surrounds the breast ducts (at protein level). In the colon, expressed in the mucous membrane and colonic crypts and in the smooth muscle cell layer which provide movement of the colon (at protein level). In the cerebellum, localized around the Purkinje neurons and the granule cells of the granular layer, but not inside cell bodies (at protein level). Outside of the cerebellar cortex, expressed in glial cells (at protein level). Highly expressed away from the cell bodies within the dentate nucleus (at protein level).

The protein resides in the cytoplasm. It is found in the cell projection. It localises to the podosome. The protein localises to the invadopodium. Its subcellular location is the cytoskeleton. The protein resides in the stress fiber. May be involved in podosome and invadosome formation. This chain is Actin filament-associated protein 1-like 1 (AFAP1L1), found in Homo sapiens (Human).